A 264-amino-acid chain; its full sequence is tRNA (guanine-N(1)-)-methyltransferase (264 aa).

S-adenosyl-L-methionine is bound by residues G125 and 145–150; that span reads LGDFVL.

This sequence belongs to the RNA methyltransferase TrmD family. In terms of assembly, homodimer.

It localises to the cytoplasm. It catalyses the reaction guanosine(37) in tRNA + S-adenosyl-L-methionine = N(1)-methylguanosine(37) in tRNA + S-adenosyl-L-homocysteine + H(+). Its function is as follows. Specifically methylates guanosine-37 in various tRNAs. The sequence is that of tRNA (guanine-N(1)-)-methyltransferase from Burkholderia lata (strain ATCC 17760 / DSM 23089 / LMG 22485 / NCIMB 9086 / R18194 / 383).